The chain runs to 389 residues: S-adenosylmethionine synthase (389 aa).

Histidine 19 provides a ligand contact to ATP. Aspartate 21 lines the Mg(2+) pocket. A K(+)-binding site is contributed by glutamate 47. 2 residues coordinate L-methionine: glutamate 60 and glutamine 103. The segment at 103–113 is flexible loop; sequence QSVDIAQGVSR. Residues 168–170, 234–235, aspartate 243, 249–250, alanine 266, and lysine 270 each bind ATP; these read DGK, RF, and RK. Aspartate 243 contacts L-methionine. Lysine 274 contacts L-methionine.

It belongs to the AdoMet synthase family. As to quaternary structure, homotetramer; dimer of dimers. It depends on Mg(2+) as a cofactor. The cofactor is K(+).

The protein resides in the cytoplasm. It carries out the reaction L-methionine + ATP + H2O = S-adenosyl-L-methionine + phosphate + diphosphate. It functions in the pathway amino-acid biosynthesis; S-adenosyl-L-methionine biosynthesis; S-adenosyl-L-methionine from L-methionine: step 1/1. Its function is as follows. Catalyzes the formation of S-adenosylmethionine (AdoMet) from methionine and ATP. The overall synthetic reaction is composed of two sequential steps, AdoMet formation and the subsequent tripolyphosphate hydrolysis which occurs prior to release of AdoMet from the enzyme. This Solidesulfovibrio magneticus (strain ATCC 700980 / DSM 13731 / RS-1) (Desulfovibrio magneticus) protein is S-adenosylmethionine synthase.